The sequence spans 369 residues: MYAVEDRAHSGHHPPPLSMDRIPPPSTMYPSSAGPSAMVSPAGQPEPESLSTVHDGRIWSLQVVQQPIRARMCGFGDKDRRPITPPPCIRLIVKDAQTQKEVDINSLDSSFYVVMADLWNADGTHEVNLVKHSATSPSISTAMSSSYPPPPHPTSSDYPASYQTNPYGQPVGQPVGQPVGYAGVGNYYGGSTQLQYQNAYPNPQAQYYQPMYGGMAQPQMPAAQPVTPGPGGMFTRNLIGCLSASAYRLYDTEDKIGVWFVLQDLSVRTEGIFRLKFSFVNVGKSVSDLPQSDIAEVINKGTAPILASTFSEPFQVFSAKKFPGVIESTPLSKVFANQGIKIPIRKDGVKGQGSRGRHSDEDDGLDNEY.

Disordered regions lie at residues 1 to 54, 138 to 174, and 346 to 369; these read MYAV…STVH, SIST…VGQP, and KDGV…DNEY. The segment covering 13–27 has biased composition (pro residues); sequence HPPPLSMDRIPPPST. In terms of domain architecture, Velvet spans 53 to 345; sequence VHDGRIWSLQ…ANQGIKIPIR (293 aa).

It belongs to the velvet family. VelB subfamily. In terms of assembly, component of the heterotrimeric velvet complex composed of laeA, veA and velB; VeA acting as a bridging protein between laeA and velB. Interacts directly with veA. Forms a heterodimeric complex with vosA; the formation of the velB-vosA complex is light-dependent.

The protein resides in the nucleus. It localises to the cytoplasm. In terms of biological role, component of the velvet transcription factor complex that controls sexual/asexual developmental ratio in response to light, promoting sexual development in the darkness while stimulating asexual sporulation under illumination. The velvet complex acts as a global regulator for secondary metabolite gene expression. Component of the velB-VosA heterodimeric complex that plays a dual role in activating genes associated with spore maturation and repressing certain development-associated genes. The velB-VosA complex binds DNA through the DNA-binding domain of vosA that recognizes an 11-nucleotide consensus sequence 5'-CTGGCCGCGGC-3' consisting of two motifs in the promoters of key developmental regulatory genes. The vosA-velB complex binds to the beta-glucan synthase fksA gene promoter in asexual spores for repression. This is Velvet complex subunit B from Emericella nidulans (strain FGSC A4 / ATCC 38163 / CBS 112.46 / NRRL 194 / M139) (Aspergillus nidulans).